The following is a 499-amino-acid chain: Pyruvate kinase 2 (499 aa).

A substrate-binding site is contributed by arginine 50. K(+) is bound by residues asparagine 52, serine 54, aspartate 84, and threonine 85. ATP is bound at residue 52–55 (NFSH). Arginine 91 is an ATP binding site. Position 241 (glutamate 241) interacts with Mg(2+). Substrate is bound by residues glycine 264, aspartate 265, and threonine 297. Residue aspartate 265 participates in Mg(2+) binding.

It belongs to the pyruvate kinase family. Homotetramer. The cofactor is Mg(2+). Requires K(+) as cofactor.

It catalyses the reaction pyruvate + ATP = phosphoenolpyruvate + ADP + H(+). Its pathway is carbohydrate degradation; glycolysis; pyruvate from D-glyceraldehyde 3-phosphate: step 5/5. Activated by fructose 2,6-bisphosphate, activated by the effector in a cooperative manner. This is Pyruvate kinase 2 (PYK2) from Trypanosoma brucei brucei.